We begin with the raw amino-acid sequence, 356 residues long: Trifolitoxin operon protein TfxC (356 aa).

In Rhizobium leguminosarum bv. trifolii, this protein is Trifolitoxin operon protein TfxC (tfxC).